We begin with the raw amino-acid sequence, 514 residues long: 2-isopropylmalate synthase (514 aa).

The 264-residue stretch at 5 to 268 (LIIFDTTLRD…DVGIDTTQIV (264 aa)) folds into the Pyruvate carboxyltransferase domain. 4 residues coordinate Mn(2+): D14, H202, H204, and N239. The interval 395–514 (KFVSLSQRSE…KDDKLNPQRA (120 aa)) is regulatory domain.

Belongs to the alpha-IPM synthase/homocitrate synthase family. LeuA type 1 subfamily. In terms of assembly, homodimer. Mn(2+) serves as cofactor.

The protein resides in the cytoplasm. It catalyses the reaction 3-methyl-2-oxobutanoate + acetyl-CoA + H2O = (2S)-2-isopropylmalate + CoA + H(+). Its pathway is amino-acid biosynthesis; L-leucine biosynthesis; L-leucine from 3-methyl-2-oxobutanoate: step 1/4. Functionally, catalyzes the condensation of the acetyl group of acetyl-CoA with 3-methyl-2-oxobutanoate (2-ketoisovalerate) to form 3-carboxy-3-hydroxy-4-methylpentanoate (2-isopropylmalate). The chain is 2-isopropylmalate synthase from Burkholderia cenocepacia (strain HI2424).